The primary structure comprises 148 residues: MAGFIGKERHALDEKGRLMIPVRFRRELSPESTGRGSTIYLMKAPDGSIELYEPDIWEGMKKSLAVLSDFNPEERLLKTMIYESLDVVAIDRQGRVPFSREFLEHAGIVRDVVIIGADTKMIVWAPERLSLLVMENAERYSSLARRYF.

2 SpoVT-AbrB domains span residues 7–56 and 85–128; these read KERH…EPDI and LDVV…APER.

The protein belongs to the MraZ family. As to quaternary structure, forms oligomers.

It is found in the cytoplasm. The protein resides in the nucleoid. This Chlorobium phaeobacteroides (strain DSM 266 / SMG 266 / 2430) protein is Transcriptional regulator MraZ.